A 325-amino-acid chain; its full sequence is Necdin (325 aa).

Disordered stretches follow at residues methionine 1 to valine 69 and alanine 77 to proline 96. The MAGE domain maps to leucine 102–alanine 301.

As to quaternary structure, binds to the transactivation domains of E2F1 and p53. Binds also SV40 large T antigen and adenovirus E1A. Interacts with nucleobindin 1 and 2. In terms of tissue distribution, brain specific. Not detected in other tissues. Expressed in postmitotic neurons. In adult brain the highest expression is in hypothalamus. Highly expressed in thalamus and midbrain. Relatively low levels are in cerebral cortex, hippocampus, striatum, olfactory bulb, cerebellum, pons and spinal cord. Also detected in neurally differentiated embryonal carcinoma cells.

The protein resides in the cytoplasm. It localises to the nucleus. The protein localises to the nucleoplasm. Its subcellular location is the nucleus matrix. Functionally, growth suppressor that facilitates the entry of the cell into cell cycle arrest. Functionally similar to the retinoblastoma protein it binds to and represses the activity of cell-cycle-promoting proteins such as SV40 large T antigen, adenovirus E1A, and the transcription factor E2F. Necdin also interacts with p53 and works in an additive manner to inhibit cell growth. Also functions as a transcription factor and directly binds to specific guanosine-rich DNA sequences. The protein is Necdin (Ndn) of Mus musculus (Mouse).